A 1577-amino-acid polypeptide reads, in one-letter code: MEPGSVVRAIFDFCPSVSEELPLFVGDVIEVLTVVDEFWLLGKKEDVTGQFPSSFVEIVTIPSLKEGERLFVCTCDFISREPNSLSLHRGDLVIIDGTPTAGWLQGRSSLGARGFFPSSCIHELCLSSQSRQWHSQNMLLQVPEYSMGQARALMGLSAQLDEELDFREGDVITIIGVPEPGWFEGELEGRRGIFPEGFVELLGPLRTADESVNAGSGDDSTLNDEVDVSPEEVESEGDEDDQQAGTYGIALYRFQALESNELDFEVGDKIRILGTLEDGWLEGRLKGKTGIFPHRFVKLCPSNRSEETMALPQGDSFPKNSESSAGEMGDSVVEEARQDPQECEEETPDSGLPEQTSEEPLDHVAPECVVDKISGQDEDASGSSPDVDLEGPRAEDPSTPDLSQEVNGISSLPPQVPLQPEEEKSQHYLTAGGSRQCPDTFSKLFPLEAKTRNYSSLPPRRTYTQGWSLQKPAPHLHRASSLTASRVNRPGHFSHTAMASCAQKHQTSAENAASLCCAPERPKRRPGLPDKEPATEITPASQGDNLDLDSKLTQQLIEFEKSLSGPSTEPKKIVRRFSIMDFYSEKDIVRGSSNSLPSRNFPERRKALRPPPPRPHTPTSTSPHLLVDQSPKPGPPLVVRPSRPAPLPPPTQQRLNTASPKPTSCALPGWEAPEKEGSEYTEKSPAQLFPCPSVLARIQDVEHDLDMHTRAQEELNLLLEEKQDESLRAETLETLKSYESTIQSLNLELQQLREMTLLSSQSSSLAAPSGSVSTEKPEQRMLEKRAKVVAELLQTEKDYIRDLEMCVERVMVPLQQAQVPNIDFEGLFGNMQTVIKVSKQLLAALEITDAVGPVFLDHRDELEGTYRLYCQNHDEAISLLDIYEKDERIQKHLQDYLADLKSLYHEWGCTNYINLGSFLIKPVQRIMRYPLLLMELLNSTPESHPDKAPLTSAVLAIKEINANINEYKRRKDLVLKYRKADEDSLMEKISKLNIHSIIKKSSRVSSHLKHLTGFAPQLKDEAFEETEKNFRMQERLIKSFIRDLSLYLQHIRESACVKVVAAMSIWDLCMERGHHDLEQFEKVHRYISDQLFTRFKERTERLVINPLNQLLNMFTGPYKLVQKRFDKLLDFYNCTERAEKLKDKKTLEDLQSARNNYEALNSQLLDELPKFQQYAQSLFTNCIHGYAEAHCDFVQKALEQLQPLLSLLKASDREGNLIAIFHEEHSRVLQQLQVFTFFPEALPAPRKPFERKTTDRQSSRKALLGMPSYMLQSEELRSSLLARYPPEKLFHVQRNFNAAQDLDVSLLEGDLVGVIKKKDPMGSQNRWLVDNGVTKGFVYSSFLKPYNPRCSHSDSSVVSHSSTESEHSGSSPSFHRQNSSSALTFNSNSMTVSFTSGLPQKQPQDTSPLRECVPETLGVSSNTGNPETGPSPCPSDPGFSCQRRPGNPADGTREISQPASTLRGCQRRSLHSEVLGYPVPGRSDQGSDSIKGTSRACQTAGDRDRGLGSSEAEGNQVYFAIYTFKARNPNELTVLANQRLRILEFKDVTGNTEWWLAEVNGKKGYVPSNYIRKTEYT.

The residue at position 1 (Met1) is an N-acetylmethionine. SH3 domains lie at 2–61 (EPGS…IVTI), 66–126 (EGER…ELCL), and 145–204 (YSMG…LLGP). Residues 209 to 242 (DESVNAGSGDDSTLNDEVDVSPEEVESEGDEDDQ) are disordered. Positions 221-242 (TLNDEVDVSPEEVESEGDEDDQ) are enriched in acidic residues. The SH3 4 domain maps to 243–302 (QAGTYGIALYRFQALESNELDFEVGDKIRILGTLEDGWLEGRLKGKTGIFPHRFVKLCPS). Disordered regions lie at residues 307 to 361 (ETMA…EEPL) and 375 to 437 (GQDE…SRQC). Positions 400-410 (PDLSQEVNGIS) are enriched in polar residues. The residue at position 494 (Ser494) is a Phosphoserine. Disordered regions lie at residues 519–547 (PERPKRRPGLPDKEPATEITPASQGDNLD) and 590–681 (RGSS…SEYT). Over residues 617–626 (TPTSTSPHLL) the composition is skewed to low complexity. A compositionally biased stretch (pro residues) spans 632-651 (KPGPPLVVRPSRPAPLPPPT). Residues 652-662 (QQRLNTASPKP) show a composition bias toward polar residues. The segment covering 672-681 (APEKEGSEYT) has biased composition (basic and acidic residues). The residue at position 684 (Ser684) is a Phosphoserine. A coiled-coil region spans residues 705–755 (LDMHTRAQEELNLLLEEKQDESLRAETLETLKSYESTIQSLNLELQQLREM). A DH domain is found at 784–967 (KRAKVVAELL…KEINANINEY (184 aa)). A BAR domain is found at 1008–1217 (LKHLTGFAPQ…LKASDREGNL (210 aa)). An SH3 5 domain is found at 1285–1348 (PPEKLFHVQR…YSSFLKPYNP (64 aa)). Residues 1353–1375 (SDSSVVSHSSTESEHSGSSPSFH) are compositionally biased toward low complexity. Disordered regions lie at residues 1353–1381 (SDSSVVSHSSTESEHSGSSPSFHRQNSSS) and 1415–1510 (ETLG…LGSS). Polar residues-rich tracts occupy residues 1418–1428 (GVSSNTGNPET) and 1484–1497 (DQGSDSIKGTSRAC). Residues 1513 to 1576 (EGNQVYFAIY…PSNYIRKTEY (64 aa)) form the SH3 6 domain.

Binds DNM1 via its N-terminal SH3 domains. The C-terminal SH3 domain binds a complex containing actin, tubulin, Hsp70 and actin-regulatory proteins, such as ENAH, EVL, WIRE, CR16, WAVE1 and NAP1L1. Interacts with FASLG. Interacts (via SH3 domain 6) with WASL. Interacts (via SH3 domain 6) interacts with ENAH. Interacts (via C-terminal domain) with TJP1; required for the apical cell-cell junction localization of DNMBP. In terms of tissue distribution, widely expressed.

Its subcellular location is the cytoplasm. It is found in the golgi apparatus. The protein resides in the golgi stack. The protein localises to the cytoskeleton. It localises to the synapse. Its subcellular location is the cell junction. Its function is as follows. Plays a critical role as a guanine nucleotide exchange factor (GEF) for CDC42 in several intracellular processes associated with the actin and microtubule cytoskeleton. Regulates the structure of apical junctions in epithelial cells. Participates in the normal lumenogenesis of epithelial cell cysts by regulating spindle orientation. Plays a role in ciliogenesis. May play a role in membrane trafficking between the cell surface and the Golgi. In Rattus norvegicus (Rat), this protein is Dynamin-binding protein.